Consider the following 177-residue polypeptide: ATP-dependent protease subunit HslV (177 aa).

The active site involves threonine 2. Residues alanine 159, aspartate 162, and threonine 165 each contribute to the Na(+) site.

This sequence belongs to the peptidase T1B family. HslV subfamily. In terms of assembly, a double ring-shaped homohexamer of HslV is capped on each side by a ring-shaped HslU homohexamer. The assembly of the HslU/HslV complex is dependent on binding of ATP.

It localises to the cytoplasm. It carries out the reaction ATP-dependent cleavage of peptide bonds with broad specificity.. Allosterically activated by HslU binding. Protease subunit of a proteasome-like degradation complex believed to be a general protein degrading machinery. The sequence is that of ATP-dependent protease subunit HslV from Lactobacillus leichmannii.